A 191-amino-acid polypeptide reads, in one-letter code: Sporulation-specific protein (191 aa).

In terms of biological role, not essential for sporulation. The sequence is that of Sporulation-specific protein (SPR6) from Saccharomyces cerevisiae (strain ATCC 204508 / S288c) (Baker's yeast).